An 818-amino-acid chain; its full sequence is Cytosolic phospholipase A2 delta (818 aa).

Residues 5 to 124 (SPGGPPGHPY…LPGKLLRKTF (120 aa)) enclose the C2 domain. Ca(2+) is bound by residues Asp-38, Asp-44, Asp-94, Asp-96, and Asp-102. A PLA2c domain is found at 273-818 (GCPEELAVHL…LEARPPRAQT (546 aa)). 330–331 (GG) serves as a coordination point for substrate. Ser-361 functions as the Nucleophile in the catalytic mechanism. Asp-647 functions as the Proton acceptor in the catalytic mechanism.

Ca(2+) serves as cofactor. Expressed in stratified squamous epithelia, such as those in skin and cervix, but not in other tissues. Strongly expressed in the upper spinous layer of the psoriatic epidermis, expressed weakly and discontinuously in atopic dermatitis and mycosis fungoides, and not detected in the epidermis of normal skin.

It is found in the cytoplasm. It localises to the cytosol. The protein resides in the membrane. It catalyses the reaction a 1,2-diacyl-sn-glycero-3-phosphocholine + H2O = a 1-acyl-sn-glycero-3-phosphocholine + a fatty acid + H(+). The enzyme catalyses 1-hexadecanoyl-2-(5Z,8Z,11Z,14Z-eicosatetraenoyl)-sn-glycero-3-phosphocholine + H2O = 1-hexadecanoyl-sn-glycero-3-phosphocholine + (5Z,8Z,11Z,14Z)-eicosatetraenoate + H(+). It carries out the reaction 1-hexadecanoyl-2-(9Z,12Z-octadecadienoyl)-sn-glycero-3-phosphocholine + H2O = (9Z,12Z)-octadecadienoate + 1-hexadecanoyl-sn-glycero-3-phosphocholine + H(+). The catalysed reaction is 1-hexadecanoyl-2-(9Z-octadecenoyl)-sn-glycero-3-phosphocholine + H2O = 1-hexadecanoyl-sn-glycero-3-phosphocholine + (9Z)-octadecenoate + H(+). It catalyses the reaction 1-hexadecanoyl-2-(5Z,8Z,11Z,14Z-eicosatetraenoyl)-sn-glycero-3-phosphoethanolamine + H2O = 1-hexadecanoyl-sn-glycero-3-phosphoethanolamine + (5Z,8Z,11Z,14Z)-eicosatetraenoate + H(+). The enzyme catalyses 1-hexadecanoyl-2-(9Z,12Z-octadecadienoyl)-sn-glycero-3-phosphoethanolamine + H2O = 1-hexadecanoyl-sn-glycero-3-phosphoethanolamine + (9Z,12Z)-octadecadienoate + H(+). The protein operates within lipid metabolism; fatty acid metabolism. Its activity is regulated as follows. Stimulated by cytosolic Ca(2+). Functionally, calcium-dependent phospholipase A2 that selectively hydrolyzes glycerophospholipids in the sn-2 position. Has a preference for linoleic acid at the sn-2 position. The sequence is that of Cytosolic phospholipase A2 delta from Homo sapiens (Human).